Consider the following 623-residue polypeptide: Membrane protein insertase YidC (623 aa).

5 helical membrane passes run 8–28, 379–399, 449–469, 507–527, and 543–563; these read LILA…LFPP, MGLA…PLAY, LPIL…FVTI, TTMA…SMWL, and IFAW…SGLV. Residues 601–617 are compositionally biased toward low complexity; sequence KPAAQPAGKAANDGAAP. The disordered stretch occupies residues 601–623; it reads KPAAQPAGKAANDGAAPAKKRKP.

This sequence belongs to the OXA1/ALB3/YidC family. Type 1 subfamily. In terms of assembly, interacts with the Sec translocase complex via SecD. Specifically interacts with transmembrane segments of nascent integral membrane proteins during membrane integration.

It localises to the cell inner membrane. Its function is as follows. Required for the insertion and/or proper folding and/or complex formation of integral membrane proteins into the membrane. Involved in integration of membrane proteins that insert both dependently and independently of the Sec translocase complex, as well as at least some lipoproteins. Aids folding of multispanning membrane proteins. The protein is Membrane protein insertase YidC of Cereibacter sphaeroides (strain ATCC 17029 / ATH 2.4.9) (Rhodobacter sphaeroides).